The following is a 238-amino-acid chain: Ribonuclease PH (238 aa).

Phosphate is bound by residues R86 and 124–126 (GTR).

This sequence belongs to the RNase PH family. As to quaternary structure, homohexameric ring arranged as a trimer of dimers.

It catalyses the reaction tRNA(n+1) + phosphate = tRNA(n) + a ribonucleoside 5'-diphosphate. Phosphorolytic 3'-5' exoribonuclease that plays an important role in tRNA 3'-end maturation. Removes nucleotide residues following the 3'-CCA terminus of tRNAs; can also add nucleotides to the ends of RNA molecules by using nucleoside diphosphates as substrates, but this may not be physiologically important. Probably plays a role in initiation of 16S rRNA degradation (leading to ribosome degradation) during starvation. The polypeptide is Ribonuclease PH (Geotalea daltonii (strain DSM 22248 / JCM 15807 / FRC-32) (Geobacter daltonii)).